The primary structure comprises 340 residues: MSIKAEYIWIDGTQPTAKLRSKTKILSDGSRLPRWGFDGSSTNQAEGHASDLVLEPVFSCPDPIRGGDHLLVLCEVLHTDLTPHPSNTRALLRPVAERFAGQEPIFGIEQEYTFLKGDRPLGFPEGGGYPAPQADYYCGVGADAIFGREIVEKHLDLCLAAGLGLSGINAEVMPGQWEFQVGALPPLEVSDHMWVARWLLHRVAEEFGVTASLDAKPAKGDWNGAGAHTNFSTRAMREGYDPIITACEALGQDDKPLEHVRQYGTGIEDRLTGAHETAPWDAYSYGASDRGASVRIPWQVEVEKKGYIEDRRPNANVDPYVVTRLMVDTCCTELARREQI.

The region spanning 3–82 is the GS beta-grasp domain; it reads IKAEYIWIDG…LCEVLHTDLT (80 aa). The region spanning 88-340 is the GS catalytic domain; it reads TRALLRPVAE…CTELARREQI (253 aa). Positions 109, 111, 171, and 178 each coordinate Mg(2+). Glutamate 276 is a binding site for L-glutamate.

It belongs to the glutamine synthetase family. In terms of assembly, homooctamer and homotetramer. The cofactor is Mg(2+).

Its subcellular location is the cytoplasm. The enzyme catalyses L-glutamate + NH4(+) + ATP = L-glutamine + ADP + phosphate + H(+). In terms of biological role, catalyzes the ATP-dependent biosynthesis of glutamine from glutamate and ammonia. The polypeptide is Glutamine synthetase (Streptomyces hygroscopicus).